Reading from the N-terminus, the 298-residue chain is uncharacterized protein (298 aa).

The active site involves Asp119.

The protein belongs to the pseudouridine synthase RluA family.

The catalysed reaction is a uridine in RNA = a pseudouridine in RNA. This is an uncharacterized protein from Helicobacter pylori (strain ATCC 700392 / 26695) (Campylobacter pylori).